A 664-amino-acid chain; its full sequence is Fructose-1,6-bisphosphatase class 3 (664 aa).

It belongs to the FBPase class 3 family. Requires Mn(2+) as cofactor.

The enzyme catalyses beta-D-fructose 1,6-bisphosphate + H2O = beta-D-fructose 6-phosphate + phosphate. It functions in the pathway carbohydrate biosynthesis; gluconeogenesis. In Bacteroides fragilis (strain YCH46), this protein is Fructose-1,6-bisphosphatase class 3.